We begin with the raw amino-acid sequence, 250 residues long: Triosephosphate isomerase (250 aa).

8–10 (NWK) is a binding site for substrate. His93 functions as the Electrophile in the catalytic mechanism. Glu165 (proton acceptor) is an active-site residue. Substrate contacts are provided by Gly171 and Ser211.

It belongs to the triosephosphate isomerase family. As to quaternary structure, homodimer.

It is found in the cytoplasm. It catalyses the reaction D-glyceraldehyde 3-phosphate = dihydroxyacetone phosphate. The protein operates within carbohydrate biosynthesis; gluconeogenesis. Its pathway is carbohydrate degradation; glycolysis; D-glyceraldehyde 3-phosphate from glycerone phosphate: step 1/1. Involved in the gluconeogenesis. Catalyzes stereospecifically the conversion of dihydroxyacetone phosphate (DHAP) to D-glyceraldehyde-3-phosphate (G3P). This is Triosephosphate isomerase from Malacoplasma penetrans (strain HF-2) (Mycoplasma penetrans).